The following is a 299-amino-acid chain: Phosphate import ATP-binding protein PstB 1 (299 aa).

A disordered region spans residues 1–51 (MTENEMTSNDSTEPTPTTETAASSPDPSGDPLIEQSIDVEGTDSTAAETGK). Over residues 10–27 (DSTEPTPTTETAASSPDP) the composition is skewed to low complexity. The ABC transporter domain maps to 54–294 (IESSDLNVFY…PESQRVEDYI (241 aa)). Residue 86 to 93 (GPSGCGKS) coordinates ATP.

Belongs to the ABC transporter superfamily. Phosphate importer (TC 3.A.1.7) family. The complex is composed of two ATP-binding proteins (PstB), two transmembrane proteins (PstC and PstA) and a solute-binding protein (PstS).

The protein resides in the cell membrane. The catalysed reaction is phosphate(out) + ATP + H2O = ADP + 2 phosphate(in) + H(+). Part of the ABC transporter complex PstSACB involved in phosphate import. Responsible for energy coupling to the transport system. This Haloarcula marismortui (strain ATCC 43049 / DSM 3752 / JCM 8966 / VKM B-1809) (Halobacterium marismortui) protein is Phosphate import ATP-binding protein PstB 1.